We begin with the raw amino-acid sequence, 208 residues long: Single-stranded DNA-binding protein DdrA (208 aa).

It belongs to the RAD52 family. As to quaternary structure, homooligomer composed of 8 to 10 subunits; probably arranged in a ring-structure.

Functionally, ssDNA-binding protein that contributes to the ionizing radiation resistance of D.radiodurans. Plays a role in DNA repair and genome reconstitution, in a RecA-independent process, since DdrA is essential for recovery from severe genomic fragmentation as a result of exposure to severe levels of ionizing radiation in an environment lacking nutrients. In vitro, binds to the 3'-ends of single-stranded DNA, protecting them from nuclease degradation. Thus, DdrA is part of a DNA end-protection system that helps to preserve genome integrity following irradiation or desiccation. Does not display DNA strand annealing activity, unlike eukaryotic Rad52 protein homologs. In Deinococcus radiodurans (strain ATCC 13939 / DSM 20539 / JCM 16871 / CCUG 27074 / LMG 4051 / NBRC 15346 / NCIMB 9279 / VKM B-1422 / R1), this protein is Single-stranded DNA-binding protein DdrA (ddrA).